A 335-amino-acid chain; its full sequence is Pyridoxal 5'-phosphate synthase subunit PdxS (335 aa).

Asp30 lines the D-ribose 5-phosphate pocket. Lys87 functions as the Schiff-base intermediate with D-ribose 5-phosphate in the catalytic mechanism. Position 159 (Gly159) interacts with D-ribose 5-phosphate. Arg171 provides a ligand contact to D-glyceraldehyde 3-phosphate. Residues Gly257 and 278–279 contribute to the D-ribose 5-phosphate site; that span reads GS.

It belongs to the PdxS/SNZ family. As to quaternary structure, in the presence of PdxT, forms a dodecamer of heterodimers.

It catalyses the reaction aldehydo-D-ribose 5-phosphate + D-glyceraldehyde 3-phosphate + L-glutamine = pyridoxal 5'-phosphate + L-glutamate + phosphate + 3 H2O + H(+). It functions in the pathway cofactor biosynthesis; pyridoxal 5'-phosphate biosynthesis. In terms of biological role, catalyzes the formation of pyridoxal 5'-phosphate from ribose 5-phosphate (RBP), glyceraldehyde 3-phosphate (G3P) and ammonia. The ammonia is provided by the PdxT subunit. Can also use ribulose 5-phosphate and dihydroxyacetone phosphate as substrates, resulting from enzyme-catalyzed isomerization of RBP and G3P, respectively. The chain is Pyridoxal 5'-phosphate synthase subunit PdxS from Thermococcus gammatolerans (strain DSM 15229 / JCM 11827 / EJ3).